The primary structure comprises 873 residues: DNA helicase/primase complex-associated protein (873 aa).

Positions 394 to 422 are disordered; the sequence is PPLPRDDGDGENNVVEVSSSTGGAHPPSD.

It belongs to the herpesviridae HEPA family. Associates with the primase and the helicase to form the helicase-primase complex. Interacts with the origin-binding protein. Interacts with the polymerase catalytic subunit.

The protein resides in the host nucleus. Functionally, component of the helicase/primase complex. Unwinds the DNA at the replication forks and generates single-stranded DNA for both leading and lagging strand synthesis. The primase synthesizes short RNA primers on the lagging strand that the polymerase presumably elongates using dNTPs. The primase-associated factor has no known catalytic activity in the complex and may serve to facilitate the formation of the replisome by directly interacting with the origin-binding protein and the polymerase. This Homo sapiens (Human) protein is DNA helicase/primase complex-associated protein (UL102).